A 30-amino-acid chain; its full sequence is U1-poneritoxin-Ng3e (30 aa).

In terms of tissue distribution, expressed by the venom gland.

The protein resides in the secreted. Has activity against some Gram-positive bacteria and S.cerevisiae. Has a non-hemolytic activity. In Neoponera goeldii (Ponerine ant), this protein is U1-poneritoxin-Ng3e.